The chain runs to 530 residues: Laccase-2 (530 aa).

An N-terminal signal peptide occupies residues 1–23 (MLLSSAFVGSCLAILNFAAAVSA). 2 consecutive Plastocyanin-like domains span residues 36–154 (NKVI…YDPE) and 167–311 (TTII…RYTN). The N-linked (GlcNAc...) asparagine glycan is linked to N82. 2 residues coordinate Cu cation: H88 and H90. Cystine bridges form between C109/C520 and C141/C228. N120 carries an N-linked (GlcNAc...) asparagine glycan. H133 and H135 together coordinate Cu cation. 8 N-linked (GlcNAc...) asparagine glycosylation sites follow: N191, N240, N292, N311, N366, N375, N392, and N412. In terms of domain architecture, Plastocyanin-like 3 spans 379 to 504 (YVNPTVPVLL…FAVVLAEAPQ (126 aa)). Cu cation contacts are provided by H428, H431, H433, H484, C485, H486, and H490.

This sequence belongs to the multicopper oxidase family. The cofactor is Cu cation.

It is found in the secreted. It carries out the reaction 4 hydroquinone + O2 = 4 benzosemiquinone + 2 H2O. Inhibited by chloride ions. Inhibited by citrate. Inhibited by oxalate. Activated by acetate. Functionally, in vitro, has activity towards 2,2'-azino-bis(3-ethylbenzthiazoline-6-sulfonic acid) (ABTS), 2,6-dimethoxy-phenol, and guaiacol. Although brown rot fungi preferentially degrade hemicellulose and cellulose, the enzyme may contribute to generating small amounts of lignin breakdown products required for catalytic reactions. The sequence is that of Laccase-2 from Fomitopsis schrenkii (Brown rot fungus).